Here is an 817-residue protein sequence, read N- to C-terminus: Transcription factor SPT20 homolog-like 2 (817 aa).

Residues 1 to 14 (MDRDLEQALDRTEN) show a composition bias toward basic and acidic residues. Disordered stretches follow at residues 1–28 (MDRDLEQALDRTENITEIAQQRRPRRRY), 249–275 (PQQEQSDCPPPPELRVSTSGQKEERKV), 369–553 (PRKK…AAGR), 598–630 (PGSGAPAPAGISGSGLQSSGGPLPDARPGAVQA), and 675–697 (QLQQPTAAHPPQPGPQGSTLGLS). Positions 423 to 440 (SHSSSGPASVSQLSSWKT) are enriched in polar residues. Low complexity-rich tracts occupy residues 469-479 (SSSGKISSGNS), 494-505 (PAAAPAVAAAAP), 513-531 (AAPALAAAAVAAAAGGAAP), and 598-618 (PGSGAPAPAGISGSGLQSSGG).

The protein belongs to the SPT20 family.

The sequence is that of Transcription factor SPT20 homolog-like 2 (SUPT20HL2) from Homo sapiens (Human).